Consider the following 220-residue polypeptide: Cytidylate kinase (220 aa).

9-17 (GPAASGKST) contributes to the ATP binding site.

This sequence belongs to the cytidylate kinase family. Type 1 subfamily.

The protein resides in the cytoplasm. The enzyme catalyses CMP + ATP = CDP + ADP. It catalyses the reaction dCMP + ATP = dCDP + ADP. The sequence is that of Cytidylate kinase from Thermotoga maritima (strain ATCC 43589 / DSM 3109 / JCM 10099 / NBRC 100826 / MSB8).